Reading from the N-terminus, the 91-residue chain is Large ribosomal subunit protein uL22 (91 aa).

It belongs to the universal ribosomal protein uL22 family. In terms of assembly, part of the 50S ribosomal subunit.

Functionally, this protein binds specifically to 23S rRNA; its binding is stimulated by other ribosomal proteins, e.g. L4, L17, and L20. It is important during the early stages of 50S assembly. It makes multiple contacts with different domains of the 23S rRNA in the assembled 50S subunit and ribosome. The globular domain of the protein is located near the polypeptide exit tunnel on the outside of the subunit, while an extended beta-hairpin is found that lines the wall of the exit tunnel in the center of the 70S ribosome. In Ash yellows phytoplasma, this protein is Large ribosomal subunit protein uL22 (rplV).